The sequence spans 746 residues: Polyribonucleotide nucleotidyltransferase (746 aa).

D515 and D521 together coordinate Mg(2+). A KH domain is found at 581 to 640 (PRVIAVKIPVDKIGEVIGPKGKMINQIQEDTGADISIEDDGTVYIGATNGPSADAARSAI). Residues 652-724 (GERYLGTVVK…DRGKLSLSPV (73 aa)) enclose the S1 motif domain.

Belongs to the polyribonucleotide nucleotidyltransferase family. The cofactor is Mg(2+).

The protein localises to the cytoplasm. The enzyme catalyses RNA(n+1) + phosphate = RNA(n) + a ribonucleoside 5'-diphosphate. Functionally, involved in mRNA degradation. Catalyzes the phosphorolysis of single-stranded polyribonucleotides processively in the 3'- to 5'-direction. The chain is Polyribonucleotide nucleotidyltransferase from Renibacterium salmoninarum (strain ATCC 33209 / DSM 20767 / JCM 11484 / NBRC 15589 / NCIMB 2235).